The sequence spans 269 residues: Formamidopyrimidine-DNA glycosylase (269 aa).

P2 serves as the catalytic Schiff-base intermediate with DNA. The active-site Proton donor is the E3. K57 acts as the Proton donor; for beta-elimination activity in catalysis. The DNA site is built by H90, R109, and K150. Residues 235 to 269 (RVYGRNGEPCRTCGTPIETAKHGQRSTFFCRRCQV) form an FPG-type zinc finger. R259 acts as the Proton donor; for delta-elimination activity in catalysis.

It belongs to the FPG family. As to quaternary structure, monomer. Requires Zn(2+) as cofactor.

The catalysed reaction is Hydrolysis of DNA containing ring-opened 7-methylguanine residues, releasing 2,6-diamino-4-hydroxy-5-(N-methyl)formamidopyrimidine.. It catalyses the reaction 2'-deoxyribonucleotide-(2'-deoxyribose 5'-phosphate)-2'-deoxyribonucleotide-DNA = a 3'-end 2'-deoxyribonucleotide-(2,3-dehydro-2,3-deoxyribose 5'-phosphate)-DNA + a 5'-end 5'-phospho-2'-deoxyribonucleoside-DNA + H(+). Its function is as follows. Involved in base excision repair of DNA damaged by oxidation or by mutagenic agents. Acts as a DNA glycosylase that recognizes and removes damaged bases. Has a preference for oxidized purines, such as 7,8-dihydro-8-oxoguanine (8-oxoG). Has AP (apurinic/apyrimidinic) lyase activity and introduces nicks in the DNA strand. Cleaves the DNA backbone by beta-delta elimination to generate a single-strand break at the site of the removed base with both 3'- and 5'-phosphates. In Pectobacterium atrosepticum (strain SCRI 1043 / ATCC BAA-672) (Erwinia carotovora subsp. atroseptica), this protein is Formamidopyrimidine-DNA glycosylase.